Reading from the N-terminus, the 1072-residue chain is MAPPTGVLSSLLLLVTIAGCARKQCSEGRTYSNAVISPNLETTRIMRVSHTFPVVDCTAACCDLSSCDLAWWFEGRCYLVSCPHKENCEPKKMGPIRSYLTFVLRPVQRPAQLLDYGDMMLNRGSPSGIWGDSPEDIRKDLTFLGKDWGLEEMSEYSDDYRELEKDLLQPSGKQEPRGSAEYTDWGLLPGSEGAFNSSVGDSPAVPAETQQDPELHYLNESASTPAPKLPERSVLLPLPTTPSSGEVLEKEKASQLQEQSSNSSGKEVLMPSHSLPPASLELSSVTVEKSPVLTVTPGSTEHSIPTPPTSAAPSESTPSELPISPTTAPRTVKELTVSAGDNLIITLPDNEVELKAFVAPAPPVETTYNYEWNLISHPTDYQGEIKQGHKQTLNLSQLSVGLYVFKVTVSSENAFGEGFVNVTVKPARRVNLPPVAVVSPQLQELTLPLTSALIDGSQSTDDTEIVSYHWEEINGPFIEEKTSVDSPVLRLSNLDPGNYSFRLTVTDSDGATNSTTAALIVNNAVDYPPVANAGPNHTITLPQNSITLNGNQSSDDHQIVLYEWSLGPGSEGKHVVMQGVQTPYLHLSAMQEGDYTFQLKVTDSSRQQSTAVVTVIVQPENNRPPVAVAGPDKELIFPVESATLDGSSSSDDHGIVFYHWEHVRGPSAVEMENIDKAIATVTGLQVGTYHFRLTVKDQQGLSSTSTLTVAVKKENNSPPRARAGGRHVLVLPNNSITLDGSRSTDDQRIVSYLWIRDGQSPAAGDVIDGSDHSVALQLTNLVEGVYTFHLRVTDSQGASDTDTATVEVQPDPRKSGLVELTLQVGVGQLTEQRKDTLVRQLAVLLNVLDSDIKVQKIRAHSDLSTVIVFYVQSRPPFKVLKAAEVARNLHMRLSKEKADFLLFKVLRVDTAGCLLKCSGHGHCDPLTKRCICSHLWMENLIQRYIWDGESNCEWSIFYVTVLAFTLIVLTGGFTWLCICCCKRQKRTKIRKKTKYTILDNMDEQERMELRPKYGIKHRSTEHNSSLMVSESEFDSDQDTIFSREKMERGNPKVSMNGSIRNGASFSYCSKDR.

Residues 1–20 (MAPPTGVLSSLLLLVTIAGC) form the signal peptide. Residues 21-99 (ARKQCSEGRT…PKKMGPIRSY (79 aa)) form the MANSC domain. Residues 21-955 (ARKQCSEGRT…WDGESNCEWS (935 aa)) are Extracellular-facing. 2 disordered regions span residues 168–277 (LQPS…SLPP) and 295–327 (VTPG…SPTT). 3 N-linked (GlcNAc...) asparagine glycosylation sites follow: Asn-196, Asn-219, and Asn-262. Polar residues predominate over residues 254 to 265 (SQLQEQSSNSSG). Low complexity predominate over residues 311 to 320 (AAPSESTPSE). 5 consecutive PKD domains span residues 341-427 (DNLI…VKPA), 435-524 (VAVV…VNNA), 530-620 (VANA…VQPE), 621-714 (NNRP…VKKE), and 720-811 (RARA…VQPD). Asn-394, Asn-421, Asn-498, Asn-513, Asn-536, and Asn-551 each carry an N-linked (GlcNAc...) asparagine glycan. Asn-733 carries an N-linked (GlcNAc...) asparagine glycan. Residues 956–976 (IFYVTVLAFTLIVLTGGFTWL) form a helical membrane-spanning segment. Topologically, residues 977-1072 (CICCCKRQKR…ASFSYCSKDR (96 aa)) are cytoplasmic. The Endocytosis signal motif lies at 995 to 998 (YTIL). A disordered region spans residues 1045-1072 (KMERGNPKVSMNGSIRNGASFSYCSKDR). Polar residues predominate over residues 1053 to 1072 (VSMNGSIRNGASFSYCSKDR).

As to quaternary structure, homodimer. Interacts with AP2M1; required for clathrin-mediated endocytosis. N-glycosylated. Post-translationally, O-glycosylated. In terms of processing, shedding of the extracellular domain and intramembrane cleavage produce several proteolytic products. The intramembrane cleavage releases a soluble cytoplasmic polypeptide that translocates to the nucleolus. In terms of tissue distribution, detected in adult brain cortex and fetal frontal lobe (at protein level). Highly expressed in brain cortex, putamen, amygdala, hippocampus and cerebellum.

The protein resides in the cell membrane. It is found in the early endosome membrane. Its function is as follows. Involved in neuronal migration during development of the cerebral neocortex. May function in a cell autonomous and a non-cell autonomous manner and play a role in appropriate adhesion between migrating neurons and radial glial fibers. May also regulate growth and differentiation of dendrites. The chain is Dyslexia-associated protein KIAA0319 (KIAA0319) from Homo sapiens (Human).